The primary structure comprises 478 residues: Early growth response protein 4 (478 aa).

Positions 15–37 are disordered; that stretch reads SKPTEGCAHTSPELPRLPARDAP. C2H2-type zinc fingers lie at residues 372-396, 402-424, and 430-452; these read FACPVESCVRTFARSDELNRHLRIH, FQCRICLRNFSRSDHLTTHVRTH, and FACDVCGRRFARSDEKKRHSKVH.

Belongs to the EGR C2H2-type zinc-finger protein family.

It is found in the nucleus. Functionally, transcriptional regulator. Recognizes and binds to the DNA sequence 5'-GCGGGGGCG-3' (GSG). Activates the transcription of target genes whose products are required for mitogenesis and differentiation. This chain is Early growth response protein 4 (Egr4), found in Rattus norvegicus (Rat).